The following is a 636-amino-acid chain: Dehydrogenase ARMGADRAFT_1018426 (636 aa).

The N-terminal stretch at 1-19 (MPALTYLLLAAIGASTVHS) is a signal peptide. FAD-binding positions include 49-50 (TA) and 70-71 (EG). N-linked (GlcNAc...) asparagine glycosylation is present at Asn-99. Residues Trp-104 and 134 to 137 (NGLT) contribute to the FAD site. Asn-253 carries N-linked (GlcNAc...) asparagine glycosylation. Val-280 serves as a coordination point for FAD. N-linked (GlcNAc...) asparagine glycosylation is found at Asn-333, Asn-380, Asn-394, and Asn-498. His-570 functions as the Proton acceptor in the catalytic mechanism. FAD-binding positions include Ala-603 and 614 to 615 (PS).

Belongs to the GMC oxidoreductase family. Requires FAD as cofactor.

It participates in secondary metabolite biosynthesis. Its function is as follows. Dehydrogenase, part of the gene cluster that mediates the biosynthesis of melleolides, a range of antifungal and phytotoxic polyketide derivatives composed of an orsellinic acid (OA) moiety esterified to various sesquiterpene alcohols. The first step in melleolides biosynthesis is performed by the delta(6)-protoilludene synthase PRO1 which catalyzes the cyclization of farnesyl diphosphate to protoilludene. The orsellinic acid synthase armB produces OA by condensing acetyl-CoA with 3 malonyl-CoA units in a three-round chain elongation reaction folowed by a C2-C7 ring closure. ArmB further catalyzes the trans-esterification of OA to the various sesquiterpene alcohols resulting from the hydroxylation of protoilludene. The melleolides cluster also includes 5 cytochrome P450 monooxygenases, 4 NAD(+)-dependent oxidoreductases, one flavin-dependent oxidoreductase, and one O-methyltransferase. The cytochrome P450 monooxygenases may be involved in protoilludene hydroxylation to elaborate melleolides with multiple alcohol groups, such as melleolide D, which carries alcohol functionalities at C-4, C-5, C-10, and C-13. The role of the NAD(+)-dependent enzymes remains unknown. Numerous melleolides, including arnamial, show 5'-O-methylation of the aromatic moiety which may be catalyzed by the methyltransferase encoded in the cluster. The flavin-dependent oxidoreductase might represent the dehydrogenase yielding the aldehyde in position 1 of arnamial and other melleolides. Finally, several halogenase localized outside of the cluster, are able to catalyze the transfer of a single chlorine atom to the melleolide backbone, resulting in a 6'-chloromelleolide product. The sequence is that of Dehydrogenase ARMGADRAFT_1018426 from Armillaria gallica (Bulbous honey fungus).